A 755-amino-acid chain; its full sequence is Polyribonucleotide nucleotidyltransferase (755 aa).

The Mg(2+) site is built by Asp-493 and Asp-499. Positions 560–619 constitute a KH domain; the sequence is PRIMTIQIPVDKIGALIGPGGKTIRNICETTGAQIDIEDDGRVFITTPDGAAARQAISMI. Residues 629-698 enclose the S1 motif domain; the sequence is GDIFLGKVVS…TTGKISLSRR (70 aa). The interval 699–755 is disordered; the sequence is AVLTGETPEERKAAGAAPRPRPREEQRGGRDEPRSLRDELRGPRREGDRPRPRRRDD. Residues 719–755 are compositionally biased toward basic and acidic residues; that stretch reads RPREEQRGGRDEPRSLRDELRGPRREGDRPRPRRRDD.

It belongs to the polyribonucleotide nucleotidyltransferase family. Mg(2+) is required as a cofactor.

The protein resides in the cytoplasm. The enzyme catalyses RNA(n+1) + phosphate = RNA(n) + a ribonucleoside 5'-diphosphate. Its function is as follows. Involved in mRNA degradation. Catalyzes the phosphorolysis of single-stranded polyribonucleotides processively in the 3'- to 5'-direction. This is Polyribonucleotide nucleotidyltransferase from Chloroflexus aurantiacus (strain ATCC 29366 / DSM 635 / J-10-fl).